An 83-amino-acid polypeptide reads, in one-letter code: MKASMYLALAGLVLLFVVGYASESEEKEFPRELLSKIFAVDDFKGKERGCKGFGDSCTPGKNECCPNYACSSKHKWCKVYLGK.

Residues 1-21 (MKASMYLALAGLVLLFVVGYA) form the signal peptide. A propeptide spanning residues 22-48 (SESEEKEFPRELLSKIFAVDDFKGKER) is cleaved from the precursor. 3 disulfides stabilise this stretch: Cys50–Cys65, Cys57–Cys70, and Cys64–Cys77. A Leucine amide modification is found at Leu81.

The protein belongs to the neurotoxin 10 (Hwtx-1) family. 15 (Hntx-3) subfamily. As to quaternary structure, monomer. As to expression, expressed by the venom gland.

Its subcellular location is the secreted. Its function is as follows. Selective antagonist of neuronal tetrodotoxin (TTX)-sensitive voltage-gated sodium channels (IC(50)=1270 nM on Nav1.1/SCN1A, 270 nM on Nav1.2/SCN2A, 491 nM on Nav1.3/SCN3A and 232 nM on Nav1.7/SCN9A). This toxin suppress Nav1.7 current amplitude without significantly altering the activation, inactivation, and repriming kinetics. Short extreme depolarizations partially activate the toxin-bound channel, indicating voltage-dependent inhibition of this toxin. This toxin increases the deactivation of the Nav1.7 current after extreme depolarizations. The toxin-Nav1.7 complex is gradually dissociated upon prolonged strong depolarizations in a voltage-dependent manner, and the unbound toxin rebinds to Nav1.7 after a long repolarization. Moreover, analysis of chimeric channels showed that the DIIS3-S4 linker is critical for toxin binding to Nav1.7. These data are consistent with this toxin interacting with Nav1.7 site 4 and trapping the domain II voltage sensor in the closed state. This is Hainantoxin-III 4 from Cyriopagopus hainanus (Chinese bird spider).